A 200-amino-acid polypeptide reads, in one-letter code: Cleavage and polyadenylation specificity factor subunit 5 (200 aa).

A Nudix hydrolase domain is found at 45-170; the sequence is LRKAVEGIII…LSLIAVSLYE (126 aa). Residues 70-72 form an interaction with RNA region; it reads NYF. Positions 77 to 98 match the Nudix box motif; sequence GKLKPGENEIDGLIRKLTKKLS.

Belongs to the Nudix hydrolase family. CPSF5 subfamily. As to quaternary structure, homodimer (via N- and C-terminus); binds RNA as homodimer. Component of the cleavage factor Im (CFIm) complex.

It is found in the nucleus. Its subcellular location is the cytoplasm. Functionally, component of the cleavage factor Im (CFIm) complex that functions as an activator of the pre-mRNA 3'-end cleavage and polyadenylation processing required for the maturation of pre-mRNA into functional mRNAs. CFIm contributes to the recruitment of multiprotein complexes on specific sequences on the pre-mRNA 3'-end, so called cleavage and polyadenylation signals (pA signals). Most pre-mRNAs contain multiple pA signals, resulting in alternative cleavage and polyadenylation (APA) producing mRNAs with variable 3'-end formation. The CFIm complex acts as a key regulator of cleavage and polyadenylation site choice during APA through its binding to 5'-UGUA-3' elements localized in the 3'-untranslated region (UTR) for a huge number of pre-mRNAs. Binds to 5'-UGUA-3' elements localized upstream of pA signals that act as enhancers of pre-mRNA 3'-end processing. The homodimer mediates simultaneous sequence-specific recognition of two 5'-UGUA-3' elements within the pre-mRNA. Plays a role in somatic cell fate transitions and pluripotency by regulating widespread changes in gene expression through an APA-dependent function. Binds to chromatin. In Dictyostelium discoideum (Social amoeba), this protein is Cleavage and polyadenylation specificity factor subunit 5.